Reading from the N-terminus, the 834-residue chain is MNLTRREFAKANAAAIAAAAAGLPILVRASNLVTEADVTSLVWNKAPCRFCGTGCSVMVATRDGQVVATHGDIKAEVNRGINCVKGYFLSKIMYGSDRLTRPLLRMKDGKFDKQGEFQPISWEQAFDIMAEKFKAALKAKGPESVGMFGSGQWTVWEGYAANKLFKAGLRSNNIDPNARHCMASAVMGFMRSFGMDEPMGCYDDIEATDSFVLWGSNMAEMHPVLWSRVTDRRLSAPQVKVAVLSTFEHRSFELADLPMVFKPQTDLIILNYIANHIIESGAVNRDFVERHVRFAHGAEDIGYGLRPDDPLEKKAKNADKANTWSDIDFKAFAEFVKPYTLERTARESGVPAERLKALAELYADPKRKVVSFWTMGFNQHTRGVWANNLIYNIHLLTGKISEPGNSPFSLTGQPSACGTAREVGTFSHRLPADLVVTNPKHRETAEKIWKVPAGTIQEKVGFHAVQQSRMLNDGVLNVYWTQVSNNMQAGPNVMQEVLPGWRNPDNFVIVSDVYPTVSAQAADLILPSAMWVEKEGAFGNAERRTQFWHQLVKAPGEAKSDLWQLVEFSKRFTTDEVWPAELLAKAPELKGKTLYDVLFRNGQVDRFPASDLAKGYANDEVDAFGFYIQKGLFEEYAAFGRGHGHDLAPFDAYHEARGLRWPVVDGKETRWRYREGYDPYVSKGSGVQFYGYPDKKAIVFALPYEPPAEAPDQDYPFWLATGRVLEHWHTGSMTARVPELYKAVPDALVYMHPEDARQLKLRRGSEVKVVSRRGEIRARVETRGRNKPPQGLVFVPFFDANKLINKVTLDATDPISKQTDYKKCAVRIELLNLA.

Residues 1–29 (MNLTRREFAKANAAAIAAAAAGLPILVRA) constitute a signal peptide (tat-type signal). In terms of domain architecture, 4Fe-4S Mo/W bis-MGD-type spans 41–97 (LVWNKAPCRFCGTGCSVMVATRDGQVVATHGDIKAEVNRGINCVKGYFLSKIMYGSD). 4 residues coordinate [4Fe-4S] cluster: C48, C51, C55, and C83. Mo-bis(molybdopterin guanine dinucleotide)-binding positions include K85, Q152, N177, C181, 214–221 (WGSNMAEM), 245–249 (STFEH), 264–266 (QTD), M375, Q379, N485, 511–512 (SD), K534, D561, and 721–730 (TGRVLEHWHT). Substrate is bound at residue F797. 2 residues coordinate Mo-bis(molybdopterin guanine dinucleotide): N805 and K822.

Belongs to the prokaryotic molybdopterin-containing oxidoreductase family. NasA/NapA/NarB subfamily. In terms of assembly, component of the periplasmic nitrate reductase NapAB complex composed of NapA and NapB. [4Fe-4S] cluster is required as a cofactor. The cofactor is Mo-bis(molybdopterin guanine dinucleotide). Predicted to be exported by the Tat system. The position of the signal peptide cleavage has not been experimentally proven.

It localises to the periplasm. It carries out the reaction 2 Fe(II)-[cytochrome] + nitrate + 2 H(+) = 2 Fe(III)-[cytochrome] + nitrite + H2O. In terms of biological role, catalytic subunit of the periplasmic nitrate reductase complex NapAB. Receives electrons from NapB and catalyzes the reduction of nitrate to nitrite. The polypeptide is Periplasmic nitrate reductase (Pseudomonas aeruginosa (strain UCBPP-PA14)).